A 308-amino-acid polypeptide reads, in one-letter code: MKLTFLGTGAAIPTKYRAHPSISLKFDGEIFLFDCGENTQRQIIFTDVSPMKINNIFISHLHGDHILGLPGLLQSVAFQGRTKPLNIYGPEETAKMLENILNVGYHSIDYPINVYEISSKTPEKIISTDNYEVYSFPVVHSVPALAYVFRQVKKPRMDLEKVNKLGIEIGPDLKRLKDGFSVELNGKIITLEDVTLPPKKGICVGYSGDTIPLNEFAEFLRELKCTTLIHEATFDKTMDKNAKETLHSTVHDALNIAKLSGVNTVILTHISARYDELSAFENDIVEFKAENPDLHVLIAEDLMEYSLK.

Zn(2+) contacts are provided by His60, His62, Asp64, His65, His140, Asp209, and His269. Asp64 acts as the Proton acceptor in catalysis.

The protein belongs to the RNase Z family. In terms of assembly, homodimer. Requires Zn(2+) as cofactor.

It carries out the reaction Endonucleolytic cleavage of RNA, removing extra 3' nucleotides from tRNA precursor, generating 3' termini of tRNAs. A 3'-hydroxy group is left at the tRNA terminus and a 5'-phosphoryl group is left at the trailer molecule.. Its function is as follows. Zinc phosphodiesterase, which displays some tRNA 3'-processing endonuclease activity. Probably involved in tRNA maturation, by removing a 3'-trailer from precursor tRNA. The protein is Ribonuclease Z of Methanococcus maripaludis (strain C6 / ATCC BAA-1332).